Reading from the N-terminus, the 410-residue chain is Peptidase T (410 aa).

His-79 serves as a coordination point for Zn(2+). Asp-81 is a catalytic residue. Asp-142 is a Zn(2+) binding site. Glu-176 acts as the Proton acceptor in catalysis. Positions 177, 199, and 381 each coordinate Zn(2+).

This sequence belongs to the peptidase M20B family. Requires Zn(2+) as cofactor.

Its subcellular location is the cytoplasm. It carries out the reaction Release of the N-terminal residue from a tripeptide.. Functionally, cleaves the N-terminal amino acid of tripeptides. This is Peptidase T from Listeria monocytogenes serotype 4b (strain CLIP80459).